The primary structure comprises 274 residues: MSLQEEIIAQLGVKPIIDPEEEIRKSVDFLKAYLRKHPFLKSYVLGISGGQDSTLAGRLAQLAVEEMRAETRDDSYRFIAVRLPYGVQADEDDAQKALTFIQPDVSLTVNIKESADAMTRAVEATGAKVSDFNKGNIKARSRMIAQYALAGSYSGAVIGTDHAAENVTAFFTKFGDGGADILPLYRLNKRQGKQLLAALGADPALYEKVPTADLEEEKPGIADEVALGVTYNEIDDYLEGKSVSAQAQETIESWWHKGQHKRHLPITIFDEFWK.

ATP is bound at residue 46 to 53 (GISGGQDS). Asp-52 serves as a coordination point for Mg(2+). Arg-140 contacts deamido-NAD(+). Thr-160 serves as a coordination point for ATP. Glu-165 contributes to the Mg(2+) binding site. Residues Lys-173 and Asp-180 each coordinate deamido-NAD(+). 2 residues coordinate ATP: Lys-189 and Thr-211. A deamido-NAD(+)-binding site is contributed by 260–261 (HK).

Belongs to the NAD synthetase family. As to quaternary structure, homodimer.

It catalyses the reaction deamido-NAD(+) + NH4(+) + ATP = AMP + diphosphate + NAD(+) + H(+). It functions in the pathway cofactor biosynthesis; NAD(+) biosynthesis; NAD(+) from deamido-NAD(+) (ammonia route): step 1/1. Functionally, catalyzes the ATP-dependent amidation of deamido-NAD to form NAD. Uses ammonia as a nitrogen source. The sequence is that of NH(3)-dependent NAD(+) synthetase from Streptococcus gordonii (strain Challis / ATCC 35105 / BCRC 15272 / CH1 / DL1 / V288).